Consider the following 186-residue polypeptide: Acetyltransferase PA2578 (186 aa).

Positions 12-176 (LQLVPFQLGH…NVVLMGLLRQ (165 aa)) constitute an N-acetyltransferase domain. Residues Gln-37, 97–99 (IVL), Gly-105, Asn-137, and 142–144 (HLY) each bind CoA.

Homodimer.

Its function is as follows. Catalyzes the transfer of an acetyl group from acetyl coenzyme A (AcCoA) to an acceptor substrate and releases both CoA and the acetylated product. It prefers the antibiotic chloramphenicol. The protein is Acetyltransferase PA2578 of Pseudomonas aeruginosa (strain ATCC 15692 / DSM 22644 / CIP 104116 / JCM 14847 / LMG 12228 / 1C / PRS 101 / PAO1).